Here is an 873-residue protein sequence, read N- to C-terminus: DNA mismatch repair protein MutS (873 aa).

625–632 (GPNMGGKS) provides a ligand contact to ATP.

This sequence belongs to the DNA mismatch repair MutS family.

Its function is as follows. This protein is involved in the repair of mismatches in DNA. It is possible that it carries out the mismatch recognition step. This protein has a weak ATPase activity. The protein is DNA mismatch repair protein MutS of Xanthomonas campestris pv. campestris (strain 8004).